A 183-amino-acid polypeptide reads, in one-letter code: DPHSPRFMCYLSILTFFMPMLVTGDNSLQLFLGWEGVGLASYLLIHFWFTRLQADKAATKAMPVNRVGDFGLAPGISGRFTLFQTVDFSTIFARASAPRNSWISCNMRLNAITLICILLLIGAVGKSAQIGSHTWSPDAMEGPTPVSALIHAATMVTAGVFMIARCSPLFEYPPTALIVITSA.

Helical transmembrane passes span 7–27 (FMCYLSILTFFMPMLVTGDNS), 30–50 (LFLGWEGVGLASYLLIHFWFT), 111–131 (AITLICILLLIGAVGKSAQIG), and 144–164 (TPVSALIHAATMVTAGVFMIA).

Belongs to the complex I subunit 5 family.

It is found in the mitochondrion inner membrane. It carries out the reaction a ubiquinone + NADH + 5 H(+)(in) = a ubiquinol + NAD(+) + 4 H(+)(out). Functionally, core subunit of the mitochondrial membrane respiratory chain NADH dehydrogenase (Complex I) that is believed to belong to the minimal assembly required for catalysis. Complex I functions in the transfer of electrons from NADH to the respiratory chain. The immediate electron acceptor for the enzyme is believed to be ubiquinone. The polypeptide is NADH-ubiquinone oxidoreductase chain 5 (NDH5) (Pisum sativum (Garden pea)).